The following is a 251-amino-acid chain: Zwei Ig domain protein zig-3 (251 aa).

The N-terminal stretch at 1–19 is a signal peptide; sequence MLLICISVLAAISAHPLSS. Ig-like C2-type domains are found at residues 42 to 144 and 160 to 244; these read PSLK…AKIS and PVIT…TFLY. Intrachain disulfides connect Cys-65-Cys-128 and Cys-181-Cys-228.

Expressed in PVT, AIM and ASI neurons, in vulva and weakly in body wall muscles.

Its subcellular location is the secreted. Functionally, required for maintaining axon position of PVQ and PVP neurons postembryonically in the ventral nerve cord (VNC) by preventing axons drifting into the opposite side of the VNC that could occur during body growth and movement. The polypeptide is Zwei Ig domain protein zig-3 (Caenorhabditis elegans).